A 465-amino-acid chain; its full sequence is Ribulose bisphosphate carboxylase large chain (465 aa).

Residue K4 is modified to N6,N6,N6-trimethyllysine. Residues N113 and T163 each contribute to the substrate site. Residue K165 is the Proton acceptor of the active site. Position 167 (K167) interacts with substrate. Mg(2+)-binding residues include K191, D193, and E194. N6-carboxylysine is present on K191. H284 (proton acceptor) is an active-site residue. Residues R285, H317, and S369 each contribute to the substrate site.

This sequence belongs to the RuBisCO large chain family. Type I subfamily. As to quaternary structure, heterohexadecamer of 8 large chains and 8 small chains; disulfide-linked. The disulfide link is formed within the large subunit homodimers. Mg(2+) is required as a cofactor. The disulfide bond which can form in the large chain dimeric partners within the hexadecamer appears to be associated with oxidative stress and protein turnover.

It is found in the plastid. The protein resides in the chloroplast. It catalyses the reaction 2 (2R)-3-phosphoglycerate + 2 H(+) = D-ribulose 1,5-bisphosphate + CO2 + H2O. The enzyme catalyses D-ribulose 1,5-bisphosphate + O2 = 2-phosphoglycolate + (2R)-3-phosphoglycerate + 2 H(+). Functionally, ruBisCO catalyzes two reactions: the carboxylation of D-ribulose 1,5-bisphosphate, the primary event in carbon dioxide fixation, as well as the oxidative fragmentation of the pentose substrate in the photorespiration process. Both reactions occur simultaneously and in competition at the same active site. This chain is Ribulose bisphosphate carboxylase large chain, found in Humiria balsamifera (Tauroniro).